The following is a 122-amino-acid chain: Large ribosomal subunit protein uL14 (122 aa).

The protein belongs to the universal ribosomal protein uL14 family. Part of the 50S ribosomal subunit. Forms a cluster with proteins L3 and L19. In the 70S ribosome, L14 and L19 interact and together make contacts with the 16S rRNA in bridges B5 and B8.

Its function is as follows. Binds to 23S rRNA. Forms part of two intersubunit bridges in the 70S ribosome. The protein is Large ribosomal subunit protein uL14 of Idiomarina loihiensis (strain ATCC BAA-735 / DSM 15497 / L2-TR).